A 164-amino-acid chain; its full sequence is I-Kappa-B like protein F1 (164 aa).

ANK repeat units follow at residues 57–89 (HGRQ…NINA), 94–124 (TGNT…DLGA), and 128–157 (QQET…AYNN).

The protein belongs to the polydnaviridae I-Kappa-B-like protein family.

In terms of biological role, suppresses the host immune response through NF-kappa-B inactivation. Possesses ankyrin repeat domains required for NF-kappa-B binding but lacks the regulatory regions required for dissociation from NF-kappa-B and degradation. Therefore, prevents host NF-kappa-B release and subsequent activation. The polypeptide is I-Kappa-B like protein F1 (F2) (Microplitis demolitor bracovirus (isolate Webb) (MdBV)).